We begin with the raw amino-acid sequence, 102 residues long: Small ribosomal subunit protein uS10m (102 aa).

This sequence belongs to the universal ribosomal protein uS10 family.

The protein localises to the mitochondrion. This chain is Small ribosomal subunit protein uS10m (RPS10), found in Marchantia polymorpha (Common liverwort).